An 88-amino-acid polypeptide reads, in one-letter code: Small ribosomal subunit protein bS20 (88 aa).

This sequence belongs to the bacterial ribosomal protein bS20 family.

In terms of biological role, binds directly to 16S ribosomal RNA. The sequence is that of Small ribosomal subunit protein bS20 from Methylorubrum extorquens (strain CM4 / NCIMB 13688) (Methylobacterium extorquens).